Consider the following 380-residue polypeptide: Small ribosomal subunit protein uS3m (380 aa).

This sequence belongs to the universal ribosomal protein uS3 family.

Its subcellular location is the mitochondrion. Functionally, essential for mitochondrial protein synthesis and required for the maturation of small ribosomal subunits. This chain is Small ribosomal subunit protein uS3m (VAR1), found in Cyberlindnera mrakii (Yeast).